Here is a 125-residue protein sequence, read N- to C-terminus: UPF0231 protein in hemN 3'region (125 aa).

This sequence belongs to the UPF0231 family.

In Mannheimia haemolytica (Pasteurella haemolytica), this protein is UPF0231 protein in hemN 3'region.